Consider the following 290-residue polypeptide: Serine protease 27 (290 aa).

The signal sequence occupies residues 1-22; sequence MRRPAAVPLLLLLCFGSQRAKA. Residues 23 to 34 constitute a propeptide, activation peptide; the sequence is ATACGRPRMLNR. In terms of domain architecture, Peptidase S1 spans 35 to 277; sequence MVGGQDTQEG…HHNWIHRIIP (243 aa). N55 carries an N-linked (GlcNAc...) asparagine glycan. C60 and C76 form a disulfide bridge. Residue H75 is the Charge relay system of the active site. The N-linked (GlcNAc...) asparagine glycan is linked to N79. Residue D124 is the Charge relay system of the active site. Disulfide bonds link C158-C235, C191-C214, and C225-C253. S229 acts as the Charge relay system in catalysis.

Belongs to the peptidase S1 family. Post-translationally, N-glycosylated. In terms of tissue distribution, expressed predominantly in the pancreas.

The protein localises to the secreted. The protein is Serine protease 27 (PRSS27) of Homo sapiens (Human).